We begin with the raw amino-acid sequence, 574 residues long: Multidrug and toxin extrusion protein 1 (574 aa).

Residues 1-51 (MEGQAAETNHRAETVVRAELCLSAEQGPETTAYSQKRCLFLPMEVWQEAQQ) are Cytoplasmic-facing. Residues 52–72 (LLALAAPAFLSQLMIFLISIV) traverse the membrane as a helical segment. Topologically, residues 73–86 (SSIFCGHLGKVELD) are extracellular. The helical transmembrane segment at 87–107 (AVSLAITIINITGVAVGTGLA) threads the bilayer. Residues 108-133 (GACDTLISQTFGGSNLKLVGIILQRG) lie on the Cytoplasmic side of the membrane. The chain crosses the membrane as a helical span at residues 134–154 (ILILLLFCFPCWALLINTESI). Residues 155-168 (LLLFRQDPEVSKLT) are Extracellular-facing. A helical transmembrane segment spans residues 169-189 (QIYVLIFLPALPAAFLYQLLA). At 190 to 204 (KYLQNQGIIYPQVLT) the chain is on the cytoplasmic side. A helical membrane pass occupies residues 205 to 225 (GFIANIFNALFNYILLYVLGL). At 226 to 230 (GVMGS) the chain is on the extracellular side. A helical transmembrane segment spans residues 231–251 (ACANTVSQFIQMILLFLYIVW). Residues 252–271 (RRLYADTWGGWSQACFEEWG) are Cytoplasmic-facing. Residues 272–291 (AFIRLAVASMLMLCIEWWAF) form a helical membrane-spanning segment. At 292 to 309 (EISMFLAGVLGMVDLAAQ) the chain is on the extracellular side. A helical membrane pass occupies residues 310 to 330 (AIIYQVAIVVYLIPLGLCIAG). At 331-350 (SIRVGHGLGAGNTEQAKRSA) the chain is on the cytoplasmic side. A helical transmembrane segment spans residues 351 to 371 (LVVLCMTELCALLSGILLATL). At 372 to 384 (KDVVAYIFTSDPN) the chain is on the extracellular side. Residues 385–405 (IVALVSYVLPVYSACLLFDAC) form a helical membrane-spanning segment. Residues 406–430 (VAACGGILRGSGKLKVGAISHTVGY) are Cytoplasmic-facing. Residues 431–451 (YVIGLPLGISLMFAAKLGIIG) traverse the membrane as a helical segment. The Extracellular portion of the chain corresponds to 452 to 453 (FW). A helical membrane pass occupies residues 454–472 (FGILACGIAQSIFLIIFVF). At 473–549 (KIDWKRASEE…AGAAQHTRTL (77 aa)) the chain is on the cytoplasmic side. The segment at 500-541 (KPSVYQEGCPTEQGDVDPGNVESIEFSQSSTSSEGTSPTPAG) is disordered. Over residues 521–538 (ESIEFSQSSTSSEGTSPT) the composition is skewed to low complexity. The helical transmembrane segment at 550 to 570 (ILTRGLALGCAVGTLIIGIVI) threads the bilayer. Residues 571-574 (RLSV) are Extracellular-facing.

Belongs to the multi antimicrobial extrusion (MATE) (TC 2.A.66.1) family.

The protein resides in the cell membrane. It is found in the apical cell membrane. It catalyses the reaction thiamine(out) + H(+)(in) = thiamine(in) + H(+)(out). It carries out the reaction estrone 3-sulfate(in) + H(+)(out) = estrone 3-sulfate(out) + H(+)(in). The catalysed reaction is creatinine(in) + H(+)(out) = creatinine(out) + H(+)(in). The enzyme catalyses agmatine(in) + H(+)(out) = agmatine(out) + H(+)(in). Multidrug efflux pump that functions as a H(+)/organic cation antiporter. Mediates the secretion of cationic compounds including drugs, toxins and endogenous metabolites. Plays a role physiological role in the excretion of drugs, toxins and endogenous metabolites through the kidney and liver, into urine and bile respectively. The sequence is that of Multidrug and toxin extrusion protein 1 (slc47a1) from Xenopus tropicalis (Western clawed frog).